Reading from the N-terminus, the 72-residue chain is Keratin-associated protein 19-5 (72 aa).

This sequence belongs to the KRTAP type 19 family. As to quaternary structure, interacts with hair keratins.

Its function is as follows. In the hair cortex, hair keratin intermediate filaments are embedded in an interfilamentous matrix, consisting of hair keratin-associated proteins (KRTAP), which are essential for the formation of a rigid and resistant hair shaft through their extensive disulfide bond cross-linking with abundant cysteine residues of hair keratins. The matrix proteins include the high-sulfur and high-glycine-tyrosine keratins. This Homo sapiens (Human) protein is Keratin-associated protein 19-5 (KRTAP19-5).